We begin with the raw amino-acid sequence, 77 residues long: Large ribosomal subunit protein uL29 (77 aa).

This sequence belongs to the universal ribosomal protein uL29 family.

The chain is Large ribosomal subunit protein uL29 from Gluconobacter oxydans (strain 621H) (Gluconobacter suboxydans).